Here is a 244-residue protein sequence, read N- to C-terminus: U4/U6.U5 tri-snRNP-associated protein 3-like protein C162.01c (244 aa).

Composition is skewed to basic and acidic residues over residues 1–11 (MSSSRSGEHRR) and 20–116 (ESSR…RRDG). Disordered stretches follow at residues 1-192 (MSSS…EDEA) and 223-244 (KKTKYRQYMNRPGGFNRPLDNE). Ser-121 and Ser-140 each carry phosphoserine. Residues 126–182 (GLERKREHEKLQAPSPKEEEERPVDQGDKMDGVKEDKDGSLEVGKSHDAMTRTKSAE) are compositionally biased toward basic and acidic residues. Over residues 183 to 192 (EEIVEQEDEA) the composition is skewed to acidic residues.

The protein belongs to the SNUT3 family. As to quaternary structure, part of a tri-snRNP complex.

Its subcellular location is the nucleus. Functionally, may play a role in mRNA splicing. The sequence is that of U4/U6.U5 tri-snRNP-associated protein 3-like protein C162.01c from Schizosaccharomyces pombe (strain 972 / ATCC 24843) (Fission yeast).